A 94-amino-acid polypeptide reads, in one-letter code: Large ribosomal subunit protein bL25 (94 aa).

The protein belongs to the bacterial ribosomal protein bL25 family. As to quaternary structure, part of the 50S ribosomal subunit; part of the 5S rRNA/L5/L18/L25 subcomplex. Contacts the 5S rRNA. Binds to the 5S rRNA independently of L5 and L18.

Its function is as follows. This is one of the proteins that binds to the 5S RNA in the ribosome where it forms part of the central protuberance. This is Large ribosomal subunit protein bL25 from Shigella boydii serotype 18 (strain CDC 3083-94 / BS512).